A 153-amino-acid chain; its full sequence is Actin-related protein 2/3 complex subunit 5-like protein (153 aa).

A Phosphoserine modification is found at Ser-64.

This sequence belongs to the ARPC5 family. As to quaternary structure, may be a component of the Arp2/3 complex in which it may replace ARPC5.

It is found in the cytoplasm. Its subcellular location is the cytoskeleton. Its function is as follows. May function as component of the Arp2/3 complex which is involved in regulation of actin polymerization and together with an activating nucleation-promoting factor (NPF) mediates the formation of branched actin networks. The polypeptide is Actin-related protein 2/3 complex subunit 5-like protein (Arpc5l) (Mus musculus (Mouse)).